The following is a 990-amino-acid chain: Nucleotide-binding leucine-rich repeat (NLR)-like protein (990 aa).

The tract at residues 22 to 304 (GWICAIPTEL…AVAAAYAKIL (283 aa)) is purine nucleoside phosphorylase domain. One can recognise an NB-ARC domain in the interval 334-563 (REEHLRQVLT…TISNYLEVYE (230 aa)). 6 TPR repeats span residues 732-765 (RDLL…KKLA), 774-807 (IGSM…MKQV), 816-849 (LGSM…RKQA), 858-891 (LMSM…KQQT), 900-933 (LASM…RKQV), and 942-975 (LQSM…ATLD). Residues 965 to 990 (QQQQQSQATLDEGRLSKPARKRRKKK) are disordered. Residues 981–990 (KPARKRRKKK) are compositionally biased toward basic residues.

The enzyme catalyses ATP + H2O = D-ribose 5-triphosphate + adenine. It carries out the reaction dATP + H2O = 2-deoxyribose 5-triphosphate + adenine. In terms of biological role, the N-terminal purine nucleoside phosphorylase (PNP) domain cleaves the N-glycosidic bond of ATP, and to a lesser extent dATP; has very weak activity on adenosine and deoxyadenosine and no activity on (d)ADP or (d)AMP. This Hyaloscypha variabilis (strain UAMH 11265 / GT02V1 / F) (Meliniomyces variabilis) protein is Nucleotide-binding leucine-rich repeat (NLR)-like protein.